Consider the following 223-residue polypeptide: Deoxyribose-phosphate aldolase (223 aa).

The active-site Proton donor/acceptor is aspartate 91. The Schiff-base intermediate with acetaldehyde role is filled by lysine 153. Lysine 182 serves as the catalytic Proton donor/acceptor.

This sequence belongs to the DeoC/FbaB aldolase family. DeoC type 1 subfamily.

It is found in the cytoplasm. The enzyme catalyses 2-deoxy-D-ribose 5-phosphate = D-glyceraldehyde 3-phosphate + acetaldehyde. It participates in carbohydrate degradation; 2-deoxy-D-ribose 1-phosphate degradation; D-glyceraldehyde 3-phosphate and acetaldehyde from 2-deoxy-alpha-D-ribose 1-phosphate: step 2/2. Functionally, catalyzes a reversible aldol reaction between acetaldehyde and D-glyceraldehyde 3-phosphate to generate 2-deoxy-D-ribose 5-phosphate. In Streptococcus pyogenes serotype M28 (strain MGAS6180), this protein is Deoxyribose-phosphate aldolase.